The following is a 246-amino-acid chain: Polyhedrin (246 aa).

Belongs to the polyhedrin family.

Major component of the virus occlusion bodies, which are large proteinaceous structures (polyhedra), that protect the virus from the outside environment for extended periods until they are ingested by insect larvae. The chain is Polyhedrin (PH) from Spodoptera exigua nuclear polyhedrosis virus (strain US) (SeMNPV).